Reading from the N-terminus, the 173-residue chain is DELTA-actitoxin-Oor1b (173 aa).

The segment at 6 to 25 is N-terminal region; it reads GAALGFNVHQTVLKALGQVS. The phosphocholine site is built by S49, V82, S100, P102, Y128, and Y133. The trp-rich region, which is important for the binding to lipid membrane stretch occupies residues 100–115; the sequence is SVPFDYNLYSNWWDVK.

The protein belongs to the actinoporin family. Sea anemone subfamily. Octamer or nonamer in membranes. Monomer in the soluble state.

Its subcellular location is the secreted. It is found in the nematocyst. The protein localises to the target cell membrane. Pore-forming protein that forms cations-selective hydrophilic pores of around 1 nm and causes cardiac stimulation and cytolysis. Pore formation is a multi-step process that involves specific recognition of membrane sphingomyelin (but neither cholesterol nor phosphatidylcholine) using aromatic rich region and adjacent phosphocholine (POC) binding site, firm binding to the membrane (mainly driven by hydrophobic interactions) accompanied by the transfer of the N-terminal region to the lipid-water interface and finally pore formation after oligomerization of monomers. Cytolytic effects include red blood cells hemolysis, platelet aggregation and lysis, cytotoxic and cytostatic effects on fibroblasts. Lethality in mammals has been ascribed to severe vasospasm of coronary vessels, cardiac arrhythmia, and inotropic effects. This Oulactis orientalis (Japan anemone) protein is DELTA-actitoxin-Oor1b.